Reading from the N-terminus, the 537-residue chain is Putative cysteine ligase BshC (537 aa).

Residues 417–457 adopt a coiled-coil conformation; sequence ASEQFLNELDQLEAQQKETYERLAAEVQGNEDNKNLVEKNN.

Belongs to the BshC family.

Involved in bacillithiol (BSH) biosynthesis. May catalyze the last step of the pathway, the addition of cysteine to glucosamine malate (GlcN-Mal) to generate BSH. In Staphylococcus carnosus (strain TM300), this protein is Putative cysteine ligase BshC.